The sequence spans 275 residues: Light-independent protochlorophyllide reductase iron-sulfur ATP-binding protein (275 aa).

Residues 12–17 (GIGKST) and Lys41 contribute to the ATP site. Ser16 lines the Mg(2+) pocket. [4Fe-4S] cluster contacts are provided by Cys97 and Cys131. An ATP-binding site is contributed by 182–183 (NR).

This sequence belongs to the NifH/BchL/ChlL family. As to quaternary structure, homodimer. Protochlorophyllide reductase is composed of three subunits; BchL, BchN and BchB. [4Fe-4S] cluster serves as cofactor.

It catalyses the reaction chlorophyllide a + oxidized 2[4Fe-4S]-[ferredoxin] + 2 ADP + 2 phosphate = protochlorophyllide a + reduced 2[4Fe-4S]-[ferredoxin] + 2 ATP + 2 H2O. Its pathway is porphyrin-containing compound metabolism; bacteriochlorophyll biosynthesis (light-independent). Component of the dark-operative protochlorophyllide reductase (DPOR) that uses Mg-ATP and reduced ferredoxin to reduce ring D of protochlorophyllide (Pchlide) to form chlorophyllide a (Chlide). This reaction is light-independent. The L component serves as a unique electron donor to the NB-component of the complex, and binds Mg-ATP. The polypeptide is Light-independent protochlorophyllide reductase iron-sulfur ATP-binding protein (Pelodictyon phaeoclathratiforme (strain DSM 5477 / BU-1)).